Here is a 198-residue protein sequence, read N- to C-terminus: V-type ATP synthase subunit E (198 aa).

Belongs to the V-ATPase E subunit family.

Produces ATP from ADP in the presence of a proton gradient across the membrane. The chain is V-type ATP synthase subunit E from Acetivibrio thermocellus (strain ATCC 27405 / DSM 1237 / JCM 9322 / NBRC 103400 / NCIMB 10682 / NRRL B-4536 / VPI 7372) (Clostridium thermocellum).